A 101-amino-acid chain; its full sequence is Putative monooxygenase Rv0793 (101 aa).

The region spanning 5–93 (VAVIARFMPR…LTRPVAVTVL (89 aa)) is the ABM domain.

Homodimer.

Its function is as follows. Putative monooygenase that might be involved in antibiotic biosynthesis, or may act as reactive oxygen species scavenger that could help in evading host defenses. In Mycobacterium tuberculosis (strain ATCC 25618 / H37Rv), this protein is Putative monooxygenase Rv0793.